Consider the following 493-residue polypeptide: Glutamyl-tRNA(Gln) amidotransferase subunit A (493 aa).

Active-site charge relay system residues include Lys-78 and Ser-158. The Acyl-ester intermediate role is filled by Ser-182.

It belongs to the amidase family. GatA subfamily. As to quaternary structure, heterotrimer of A, B and C subunits.

It carries out the reaction L-glutamyl-tRNA(Gln) + L-glutamine + ATP + H2O = L-glutaminyl-tRNA(Gln) + L-glutamate + ADP + phosphate + H(+). In terms of biological role, allows the formation of correctly charged Gln-tRNA(Gln) through the transamidation of misacylated Glu-tRNA(Gln) in organisms which lack glutaminyl-tRNA synthetase. The reaction takes place in the presence of glutamine and ATP through an activated gamma-phospho-Glu-tRNA(Gln). This chain is Glutamyl-tRNA(Gln) amidotransferase subunit A, found in Methylocella silvestris (strain DSM 15510 / CIP 108128 / LMG 27833 / NCIMB 13906 / BL2).